We begin with the raw amino-acid sequence, 167 residues long: SsrA-binding protein (167 aa).

A disordered region spans residues 137–167 (GKQSHDKRDAAKERDWQRDKQRVMRRHNRDA). Positions 139-158 (QSHDKRDAAKERDWQRDKQR) are enriched in basic and acidic residues.

This sequence belongs to the SmpB family.

The protein localises to the cytoplasm. Required for rescue of stalled ribosomes mediated by trans-translation. Binds to transfer-messenger RNA (tmRNA), required for stable association of tmRNA with ribosomes. tmRNA and SmpB together mimic tRNA shape, replacing the anticodon stem-loop with SmpB. tmRNA is encoded by the ssrA gene; the 2 termini fold to resemble tRNA(Ala) and it encodes a 'tag peptide', a short internal open reading frame. During trans-translation Ala-aminoacylated tmRNA acts like a tRNA, entering the A-site of stalled ribosomes, displacing the stalled mRNA. The ribosome then switches to translate the ORF on the tmRNA; the nascent peptide is terminated with the 'tag peptide' encoded by the tmRNA and targeted for degradation. The ribosome is freed to recommence translation, which seems to be the essential function of trans-translation. This chain is SsrA-binding protein, found in Xanthomonas campestris pv. campestris (strain 8004).